The following is a 232-amino-acid chain: Orotate phosphoribosyltransferase (232 aa).

5-phospho-alpha-D-ribose 1-diphosphate-binding positions include R107, K108, K111, H113, and E133–S141. Position 137 (T137) interacts with orotate.

The protein belongs to the purine/pyrimidine phosphoribosyltransferase family. PyrE subfamily. Homodimer. It depends on Mg(2+) as a cofactor.

It carries out the reaction orotidine 5'-phosphate + diphosphate = orotate + 5-phospho-alpha-D-ribose 1-diphosphate. The protein operates within pyrimidine metabolism; UMP biosynthesis via de novo pathway; UMP from orotate: step 1/2. Functionally, catalyzes the transfer of a ribosyl phosphate group from 5-phosphoribose 1-diphosphate to orotate, leading to the formation of orotidine monophosphate (OMP). The chain is Orotate phosphoribosyltransferase from Sinorhizobium medicae (strain WSM419) (Ensifer medicae).